Consider the following 179-residue polypeptide: Large ribosomal subunit protein uL5 (179 aa).

It belongs to the universal ribosomal protein uL5 family. As to quaternary structure, part of the 50S ribosomal subunit; part of the 5S rRNA/L5/L18/L25 subcomplex. Contacts the 5S rRNA and the P site tRNA. Forms a bridge to the 30S subunit in the 70S ribosome.

Functionally, this is one of the proteins that bind and probably mediate the attachment of the 5S RNA into the large ribosomal subunit, where it forms part of the central protuberance. In the 70S ribosome it contacts protein S13 of the 30S subunit (bridge B1b), connecting the 2 subunits; this bridge is implicated in subunit movement. Contacts the P site tRNA; the 5S rRNA and some of its associated proteins might help stabilize positioning of ribosome-bound tRNAs. The sequence is that of Large ribosomal subunit protein uL5 from Cronobacter sakazakii (strain ATCC BAA-894) (Enterobacter sakazakii).